Reading from the N-terminus, the 146-residue chain is Large ribosomal subunit protein uL15 (146 aa).

Positions 1–59 are disordered; the sequence is MRLEELKAPAGANKRTKRVGRGTGSGHGKTSTRGHKGQKSRSGGGVRPGFEGGQMPLQR. Positions 30 to 39 are enriched in basic residues; it reads TSTRGHKGQK. The segment covering 42 to 52 has biased composition (gly residues); sequence SGGGVRPGFEG.

It belongs to the universal ribosomal protein uL15 family. Part of the 50S ribosomal subunit.

Its function is as follows. Binds to the 23S rRNA. The chain is Large ribosomal subunit protein uL15 from Syntrophomonas wolfei subsp. wolfei (strain DSM 2245B / Goettingen).